A 432-amino-acid polypeptide reads, in one-letter code: Glutamyl-tRNA reductase (432 aa).

Substrate-binding positions include 55–58 (TCNR), S114, 119–121 (ETQ), and Q125. C56 acts as the Nucleophile in catalysis. NADP(+) is bound at residue 194 to 199 (GAGEMI).

This sequence belongs to the glutamyl-tRNA reductase family. In terms of assembly, homodimer.

It catalyses the reaction (S)-4-amino-5-oxopentanoate + tRNA(Glu) + NADP(+) = L-glutamyl-tRNA(Glu) + NADPH + H(+). It functions in the pathway porphyrin-containing compound metabolism; protoporphyrin-IX biosynthesis; 5-aminolevulinate from L-glutamyl-tRNA(Glu): step 1/2. Functionally, catalyzes the NADPH-dependent reduction of glutamyl-tRNA(Glu) to glutamate 1-semialdehyde (GSA). This Burkholderia ambifaria (strain ATCC BAA-244 / DSM 16087 / CCUG 44356 / LMG 19182 / AMMD) (Burkholderia cepacia (strain AMMD)) protein is Glutamyl-tRNA reductase.